Here is a 503-residue protein sequence, read N- to C-terminus: Galactose/methyl galactoside import ATP-binding protein MglA 2 (503 aa).

2 consecutive ABC transporter domains span residues 11 to 246 (LEMT…VGRE) and 257 to 503 (TPKE…SRYL). 43–50 (GENGAGKS) serves as a coordination point for ATP.

It belongs to the ABC transporter superfamily. Galactose/methyl galactoside importer (TC 3.A.1.2.3) family. In terms of assembly, the complex is composed of one ATP-binding protein (MglA), two transmembrane proteins (MglC) and a solute-binding protein (MglB).

It is found in the cell inner membrane. The enzyme catalyses D-galactose(out) + ATP + H2O = D-galactose(in) + ADP + phosphate + H(+). It catalyses the reaction methyl beta-D-galactoside(out) + ATP + H2O = methyl beta-D-galactoside(in) + ADP + phosphate + H(+). In terms of biological role, part of the ABC transporter complex MglABC involved in galactose/methyl galactoside import. Responsible for energy coupling to the transport system. This chain is Galactose/methyl galactoside import ATP-binding protein MglA 2, found in Photobacterium profundum (strain SS9).